Here is a 430-residue protein sequence, read N- to C-terminus: Chromatin assembly factor 1 p55 subunit (430 aa).

2 positions are modified to phosphoserine: Ser-11 and Ser-100. WD repeat units follow at residues 126–159 (NHEGEVNRARYMPQNACVIATKTPSSDVLVFDYT), 179–210 (GHQKEGYGLSWNPNLNGYLLSASDDHTICLWD), 229–260 (GHTAVVEDVAWHLLHESLFGSVADDQKLMIWD), 275–306 (AHTAEVNCLSFNPYSEFILATGSADKTVALWD), 319–350 (SHKDEIFQVQWSPHNETILASSGTDRRLHVWD), and 376–407 (GHTAKISDFSWNPNEPWIICSVSEDNIMQVWQ).

This sequence belongs to the WD repeat RBAP46/RBAP48/MSI1 family. In terms of assembly, probably binds directly to helix 1 of the histone fold of histone H4, a region that is not accessible when H4 is in chromatin. Self associates. Associates with chromatin. Component of the CAF-1 complex, composed of Caf1-55, Caf1-105 and Caf1-180; within the CAF-1 complex, Caf1-180 interacts directly with both Caf1-55 and Caf1-105. Component of the NuRD complex, composed of at least Caf1-55, Mi-2, MTA1-like and HDAC1/Rpd3. Within the NuRD complex, Caf1-55 may interact directly with Mi-2, MTA1-like and HDAC1/Rpd3. The NuRD complex may also associate with the methyl-DNA binding protein MBD-like via Caf1-55 and Mi-2. Component of the NURF complex, composed of Caf1-55, E(bx), Nurf-38 and Iswi. Component of the polycomb repressive complex 2 (PRC2, also known as the Esc/E(Z) complex), composed of Caf1-55, esc, E(z), Su(z)12, and possibly pho. PRC2 associates with the accessory components Jarid2 and jing to form the PRC2 Jarid2-jing variant (PRC2.2). PRC2 may also associate with Pcl and HDAC1/Rpd3 during early embryogenesis. Interacts with Rbf and Rbf2. Component of the DREAM complex at least composed of Myb, Caf1-55, mip40, mip120, mip130, E2f2, Dp, Rbf, Rbf2, lin-52, HDAC1/Rpd3 and l(3)mbt.

The protein localises to the nucleus. Its function is as follows. Core histone-binding subunit that may target chromatin assembly factors, chromatin remodeling factors and histone deacetylases to their histone substrates in a manner that is regulated by nucleosomal DNA. Component of several complexes which regulate chromatin metabolism. These include the chromatin assembly factor 1 (CAF-1) complex, which is required for chromatin assembly following DNA replication and DNA repair; the nucleosome remodeling and deacetylase complex (the NuRD complex), which promotes transcriptional repression by histone deacetylation and nucleosome remodeling; the nucleosome remodeling factor (NURF) complex, which catalyzes ATP-dependent nucleosome sliding and facilitates transcription of chromatin; and the polycomb group (PcG) repressor complex ESC-E(Z), which promotes repression of homeotic genes during development. Also required for transcriptional repression of E2F target genes by E2f2 and Rbf or Rbf2. The protein is Chromatin assembly factor 1 p55 subunit of Drosophila melanogaster (Fruit fly).